The primary structure comprises 333 residues: MEKFSVTVIGAGVYGTAIAVAIAKHGNMVLLWGHNSQHIKILKIDRSNQVDLPGVFFPDSLYVEESLSVAADFSQNILIAVPSHVFRCVLLKLRLNLKNNFRIIIASKGLEPKTGWLLQDVVYDVLGKEVPCAVISGPTFAHELAIGLPAAIELASADIKFRYDIEHLLYSVKNLRVYKTTDVIGVQIAGAVKNVIAIGVGISDGMGFGANARAALITRGLSEMIRLGKSIGAISVDVFVGLAGLGDLVLTCTDDQSRNRRFGMLLGQGMHVDYAQKSIGQLIEGISNTKEVYMLSVKYKVIMPITEQIYKILYENKNVHEAVYSLIRRSYIL.

The NADPH site is built by tyrosine 14, histidine 34, and lysine 108. Residues lysine 108, glycine 137, and threonine 139 each coordinate sn-glycerol 3-phosphate. Alanine 141 provides a ligand contact to NADPH. The sn-glycerol 3-phosphate site is built by lysine 193, aspartate 247, serine 257, arginine 258, and asparagine 259. The Proton acceptor role is filled by lysine 193. Arginine 258 provides a ligand contact to NADPH. Positions 282 and 284 each coordinate NADPH.

It belongs to the NAD-dependent glycerol-3-phosphate dehydrogenase family.

It localises to the cytoplasm. The catalysed reaction is sn-glycerol 3-phosphate + NAD(+) = dihydroxyacetone phosphate + NADH + H(+). It catalyses the reaction sn-glycerol 3-phosphate + NADP(+) = dihydroxyacetone phosphate + NADPH + H(+). The protein operates within membrane lipid metabolism; glycerophospholipid metabolism. Its function is as follows. Catalyzes the reduction of the glycolytic intermediate dihydroxyacetone phosphate (DHAP) to sn-glycerol 3-phosphate (G3P), the key precursor for phospholipid synthesis. The protein is Glycerol-3-phosphate dehydrogenase [NAD(P)+] of Blochmanniella floridana.